The sequence spans 305 residues: Ribonuclease BN (305 aa).

His64, His66, Asp68, His69, His141, Asp212, and His270 together coordinate Zn(2+). Asp68 acts as the Proton acceptor in catalysis.

Belongs to the RNase Z family. RNase BN subfamily. In terms of assembly, homodimer. It depends on Zn(2+) as a cofactor.

In terms of biological role, zinc phosphodiesterase, which has both exoribonuclease and endoribonuclease activities. This chain is Ribonuclease BN, found in Shigella flexneri.